Consider the following 3966-residue polypeptide: Histone-lysine N-methyltransferase 2A (3966 aa).

Disordered stretches follow at residues 1–106 and 130–231; these read MAHS…LLRV and VFGE…GVKI. The short motif at 6–25 is the Menin-binding motif (MBM) element; it reads RWRFPARPGTTGGGGGGGRR. The segment covering 15–29 has biased composition (gly residues); the sequence is TTGGGGGGGRRGLGG. Low complexity predominate over residues 75-102; the sequence is GAAAASAASSSSASSSSSSSSSASSGPA. The short motif at 121–132 is the Integrase domain-binding motif 1 (IBM1) element; that stretch reads GTNLRRFRAVFG. Ser134 and Ser140 each carry phosphoserine; by CK2. The Integrase domain-binding motif 2 (IBM2) motif lies at 145–150; the sequence is QFLGFG. The residue at position 151 (Ser151) is a Phosphoserine. A DNA-binding region (a.T hook 1) is located at residues 167 to 178; it reads KASPRKPRGRPR. Residue Ser195 is modified to Phosphoserine. Residues 200-218 show a composition bias toward basic and acidic residues; the sequence is SETKSADKIKKKDSKSIEK. The segment at residues 215–225 is a DNA-binding region (a.T hook 2); that stretch reads SIEKKRGRPPT. The residue at position 237 (Lys237) is an N6-acetyllysine. Residues 299-307 constitute a DNA-binding region (a.T hook 3); it reads RRRGRPPST. Residues 322–343 are disordered; that stretch reads LEKPQKVRKDKEGTPPLTKEDK. At Lys371 the chain carries N6-acetyllysine. Residues 440–590 form a disordered region; the sequence is RLESTPNSRF…PWLMPPTIPL (151 aa). Low complexity predominate over residues 450-489; sequence SATSCGSSEKSSAASQHSSQMSSDSSRSSSPSIDTTSDSQ. Ser516 is modified (phosphoserine). Positions 544–557 are enriched in low complexity; the sequence is LPTLQSAPQQQTSS. Residues 558–571 are compositionally biased toward pro residues; sequence SPPPPLLTPPPPLQ. Lys634 is subject to N6-acetyllysine. Phosphoserine is present on Ser678. Disordered regions lie at residues 711 to 943, 963 to 1003, 1034 to 1064, and 1101 to 1161; these read ESVT…ADVA, RGNL…TSSI, IEKSKSLKQTDQPKAQGQESDSSETSVRGPR, and ILSS…CQVP. Low complexity-rich tracts occupy residues 717-730 and 760-790; these read SNRTSSGASSSGVS and LSTSELSPLTPPSSVSSSLSIPVSPLAASAL. Polar residues-rich tracts occupy residues 791–806 and 817–830; these read NPTFTFPSHSLTQSGE and QTSALAEPFSSNSP. A Phosphothreonine modification is found at Thr837. Residues 843 to 887 are compositionally biased toward basic and acidic residues; it reads EKGRKKDTAPEELSKDRDADKSVEKDKSRERDREREKENKRESRK. Phosphoserine is present on Ser923. Positions 989–1003 are enriched in low complexity; the sequence is SAPSSSTVKHSTSSI. Residues 1040-1059 are compositionally biased toward polar residues; sequence LKQTDQPKAQGQESDSSETS. A Phosphoserine modification is found at Ser1053. A compositionally biased stretch (basic and acidic residues) spans 1101-1111; that stretch reads ILSSMGNDDKS. Residue Lys1127 is modified to N6-acetyllysine. Residues 1144–1192 form a CXXC-type zinc finger; it reads KKGRRSRRCGQCPGCQVPEDCGICTNCLDKPKFGGRNIKKQCCKMRKCQ. Positions 1152, 1155, 1158, 1164, 1167, 1170, 1186, and 1191 each coordinate Zn(2+). The tract at residues 1196 to 1390 is disordered; it reads WMPSKASLQK…PLSNGISSKQ (195 aa). Over residues 1217–1229 the composition is skewed to basic and acidic residues; it reads SKTTEKKESKEST. Positions 1230-1241 are enriched in low complexity; sequence AVKSPLEPAQKA. Lys1232 carries the post-translational modification N6-acetyllysine. Positions 1245–1270 are enriched in basic and acidic residues; it reads PREEPAPKKSSSEPPPRKPVEEKSEE. The segment covering 1369–1390 has biased composition (polar residues); that stretch reads KQENAGTLNILNPLSNGISSKQ. PHD-type zinc fingers lie at residues 1430 to 1481, 1478 to 1532, and 1565 to 1629; these read RVVC…CKFC, CKFC…CVRC, and GNFC…CTER. The tract at residues 1583–1599 is interaction with histone H3K4me3; the sequence is KMMQCGKCDRWVHSKCE. The Bromo domain occupies 1637–1767; the sequence is ALEKELQASL…SFFIRQMERV (131 aa). Disordered regions lie at residues 1665 to 1714 and 1807 to 1870; these read YRQA…EGVK and WQER…PGID. Over residues 1828-1849 the composition is skewed to pro residues; it reads APKPKGPGEPDSPTPLHPPTPP. At Ser1839 the chain carries Phosphoserine. Position 1847 is a phosphothreonine (Thr1847). Residue Ser1860 is modified to Phosphoserine. The C2HC pre-PHD-type zinc-finger motif lies at 1872 to 1912; that stretch reads NRQCALCLMYGDDSANDAGRLLYIGQNEWTHVNCALWSAEV. Residues 1933-1980 form a PHD-type 4 zinc finger; sequence LRCEFCQKPGATVGCCLTSCTSNYHFMCSRAKNCVFLDDKKVYCQRHR. The FYR N-terminal domain occupies 2020–2076; it reads NIHMMIGSMTIDCLGILNDLSDCEDKLFPIGYQCSRVYWSTTDARKRCVYTCKIMEC. Ser2100 carries the post-translational modification Phosphoserine. The disordered stretch occupies residues 2147–2174; sequence RTPSYSPTQRSPGCRPLPSAGSPTPTTH. Position 2148 is a phosphothreonine (Thr2148). Phosphoserine occurs at positions 2152 and 2202. 4 disordered regions span residues 2214–2339, 2371–2619, 2639–2673, and 2709–2759; these read VRTG…ATPG, RGQR…SARA, EDIPFYSNSTGKKRGKRSAEGQVDGADDLSTSDED, and KISQ…DAGE. Residues 2218–2230 are compositionally biased toward low complexity; sequence SAYSRSSVSSVPS. 2 stretches are compositionally biased toward polar residues: residues 2250–2284 and 2308–2320; these read LSSSANLGHSAPPSSSSQRTVGGSKTSHLDGSSPS and TSSSKSTDGSAHS. Basic and acidic residues-rich tracts occupy residues 2411 to 2422 and 2430 to 2440; these read ILHEHIGSSSRD and SSKETCKEKHS. The segment covering 2498-2509 has biased composition (polar residues); that stretch reads GQSTQVEGSSKE. Residue Lys2524 forms a Glycyl lysine isopeptide (Lys-Gly) (interchain with G-Cter in SUMO2) linkage. A compositionally biased stretch (polar residues) spans 2528 to 2537; sequence ENQSKNTQKE. Ser2560 is modified (phosphoserine). The segment covering 2569–2588 has biased composition (polar residues); the sequence is PSPNNTLSQDPQSNNYQNLP. Residue Ser2607 is modified to Phosphoserine. Over residues 2609–2618 the composition is skewed to basic residues; the sequence is KRRYPRRSAR. Acidic residues predominate over residues 2663 to 2673; it reads GADDLSTSDED. Over residues 2722 to 2737 the composition is skewed to polar residues; the sequence is SDTSVTATSRKSSQIP. Residues 2740-2759 show a composition bias toward basic and acidic residues; it reads NGKENGTENLKIDRPEDAGE. Ser2792 is subject to Phosphoserine. A 9aaTAD motif is present at residues 2843–2851; sequence SDIMDFVLK. Ser2951 carries the post-translational modification Phosphoserine. Residue Lys2954 is modified to N6-acetyllysine. Disordered stretches follow at residues 2958–3060 and 3164–3239; these read ITEK…NAAV and AAQS…PSNI. Residues 3012 to 3025 are compositionally biased toward polar residues; that stretch reads HGNSQDLTRNSGTP. Ser3032 bears the Phosphoserine mark. A compositionally biased stretch (polar residues) spans 3035 to 3060; the sequence is VPVQNQKYVPSSTDSPGPSQISNAAV. Over residues 3167 to 3178 the composition is skewed to low complexity; that stretch reads SSFPPNISSPPS. A compositionally biased stretch (polar residues) spans 3196–3212; sequence EANQRTDLTTTVATPSS. Residues 3214–3229 are compositionally biased toward basic residues; that stretch reads LKKRPISRLHTRKNKK. A Phosphothreonine modification is found at Thr3369. Lys3459 bears the N6-acetyllysine mark. Residues 3462–3640 form a disordered region; that stretch reads TLTSQRDRDP…AMEEEESGFS (179 aa). Positions 3475–3487 are enriched in polar residues; the sequence is PGTQPSNFTQTAE. Over residues 3501-3528 the composition is skewed to low complexity; the sequence is PSAKPASSASPGSSPSSGQQSGSSSVPG. Residues Ser3510 and Ser3523 each carry the phosphoserine modification. Residues 3558 to 3570 show a composition bias toward basic and acidic residues; sequence TSSEAHIPHRDTD. The region spanning 3663–3744 is the FYR C-terminal domain; that stretch reads KKGLVFEISS…KHCRNYKFRF (82 aa). The WDR5 interaction motif (WIN) signature appears at 3759–3764; that stretch reads GSARAE. The interval 3782-3805 is disordered; that stretch reads HRQPPEYNPNDEEEEEVQLKSARR. In terms of domain architecture, SET spans 3826 to 3942; it reads EAVGVYRSPI…RGEELTYDYK (117 aa). 2 residues coordinate S-adenosyl-L-methionine: His3836 and Arg3838. S-methylcysteine; by autocatalysis is present on Cys3879. S-adenosyl-L-methionine-binding positions include Tyr3880 and 3903–3904; that span reads NH. 2 residues coordinate Zn(2+): Cys3906 and Cys3954. The region spanning 3950–3966 is the Post-SET domain; sequence NKLPCNCGAKKCRKFLN. An S-adenosyl-L-methionine-binding site is contributed by Asn3955. The Zn(2+) site is built by Cys3956 and Cys3961.

The protein belongs to the class V-like SAM-binding methyltransferase superfamily. Histone-lysine methyltransferase family. TRX/MLL subfamily. In terms of assembly, MLL cleavage product N320 heterodimerizes with MLL cleavage product C180 (via SET and FYRC domains). Component of some MLL1/MLL complex, at least composed of the core components KMT2A/MLL1, ASH2L, HCFC1/HCF1, HCFC2, WDR5, DPY30 and RBBP5, as well as the facultative components BACC1, CHD8, E2F6, HSP70, INO80C, KANSL1, LAS1L, MAX, MCRS1, MEN1, MGA, KAT8/MOF, PELP1, PHF20, PRP31, RING2, RUVB1/TIP49A, RUVB2/TIP49B, SENP3, TAF1, TAF4, TAF6, TAF7, TAF9 and TEX10. Interacts (via WIN motif) with WDR5; the interaction is direct. Interaction with WDR5 is required for stable interaction with ASH2L and RBBP5, and thereby also for optimal histone methyltransferase activity. Interacts with KAT8/MOF; the interaction is direct. Interacts with SBF1 and PPP1R15A. Interacts with ZNF335. Interacts with CLOCK and BMAL1 in a circadian manner. Interacts with PPIE; this results in decreased histone H3 methyltransferase activity. Interacts with CREBBP. Interacts with the WRAD complex composed of WDR5, RBBP5, ASH2L and DPY30. Interacts (via MBM motif) with MEN1. Interacts (via IBM motifs) with PSIP1 (via IBD domain) with moderate affinity whereas the KMT2A-MEN1 complex interacts with a greater affinity; MEN1 enhances interaction of KMT2A with PSIP1. Phosphorylation increases its affinity for PSIP1. Forms a complex with CREBBP and CREB1. Post-translationally, proteolytic cleavage by TASP1 generates MLL cleavage 3product N320 and MLL cleavage product C180, which reassemble through a non-covalent association. 2 cleavage sites exist, cleavage site 1 (CS1) and cleavage site 2 (CS2), to generate MLL cleavage products N320 and C180. CS2 is the major site. Phosphorylation increases its interaction with PSIP1. In terms of processing, auto-methylated at Cys-3879: auto-methylation is inhibited by the WRAD complex and unmodified histone H3.

It localises to the nucleus. The enzyme catalyses L-lysyl(4)-[histone H3] + S-adenosyl-L-methionine = N(6)-methyl-L-lysyl(4)-[histone H3] + S-adenosyl-L-homocysteine + H(+). It carries out the reaction N(6)-methyl-L-lysyl(4)-[histone H3] + S-adenosyl-L-methionine = N(6),N(6)-dimethyl-L-lysyl(4)-[histone H3] + S-adenosyl-L-homocysteine + H(+). It catalyses the reaction L-cysteinyl-[protein] + S-adenosyl-L-methionine = S-methyl-L-cysteinyl-[protein] + S-adenosyl-L-homocysteine + H(+). Histone methyltransferase that plays an essential role in early development and hematopoiesis. Catalytic subunit of the MLL1/MLL complex, a multiprotein complex that mediates both methylation of 'Lys-4' of histone H3 (H3K4me) complex and acetylation of 'Lys-16' of histone H4 (H4K16ac). Catalyzes methyl group transfer from S-adenosyl-L-methionine to the epsilon-amino group of 'Lys-4' of histone H3 (H3K4) via a non-processive mechanism. Part of chromatin remodeling machinery predominantly forms H3K4me1 and H3K4me2 methylation marks at active chromatin sites where transcription and DNA repair take place. Has weak methyltransferase activity by itself, and requires other component of the MLL1/MLL complex to obtain full methyltransferase activity. Has no activity toward histone H3 phosphorylated on 'Thr-3', less activity toward H3 dimethylated on 'Arg-8' or 'Lys-9', while it has higher activity toward H3 acetylated on 'Lys-9'. Binds to unmethylated CpG elements in the promoter of target genes and helps maintain them in the nonmethylated state. Required for transcriptional activation of HOXA9. Promotes PPP1R15A-induced apoptosis. Plays a critical role in the control of circadian gene expression and is essential for the transcriptional activation mediated by the CLOCK-BMAL1 heterodimer. Establishes a permissive chromatin state for circadian transcription by mediating a rhythmic methylation of 'Lys-4' of histone H3 (H3K4me) and this histone modification directs the circadian acetylation at H3K9 and H3K14 allowing the recruitment of CLOCK-BMAL1 to chromatin. Also has auto-methylation activity on Cys-3879 in absence of histone H3 substrate. This chain is Histone-lysine N-methyltransferase 2A (Kmt2a), found in Mus musculus (Mouse).